The chain runs to 224 residues: UPF0758 protein PD_0117 (224 aa).

The MPN domain occupies 102-224 (SIHDPISAGR…PVSFAEHGWL (123 aa)). His173, His175, and Asp186 together coordinate Zn(2+). Positions 173–186 (HNHPSGNREPSPAD) match the JAMM motif motif.

It belongs to the UPF0758 family.

In Xylella fastidiosa (strain Temecula1 / ATCC 700964), this protein is UPF0758 protein PD_0117.